Consider the following 165-residue polypeptide: ATP synthase subunit b (165 aa).

A helical transmembrane segment spans residues 7 to 27; sequence STTIGDIIIVSGSVLLLFILI.

It belongs to the ATPase B chain family. As to quaternary structure, F-type ATPases have 2 components, F(1) - the catalytic core - and F(0) - the membrane proton channel. F(1) has five subunits: alpha(3), beta(3), gamma(1), delta(1), epsilon(1). F(0) has three main subunits: a(1), b(2) and c(10-14). The alpha and beta chains form an alternating ring which encloses part of the gamma chain. F(1) is attached to F(0) by a central stalk formed by the gamma and epsilon chains, while a peripheral stalk is formed by the delta and b chains.

It is found in the cell membrane. Functionally, f(1)F(0) ATP synthase produces ATP from ADP in the presence of a proton or sodium gradient. F-type ATPases consist of two structural domains, F(1) containing the extramembraneous catalytic core and F(0) containing the membrane proton channel, linked together by a central stalk and a peripheral stalk. During catalysis, ATP synthesis in the catalytic domain of F(1) is coupled via a rotary mechanism of the central stalk subunits to proton translocation. Its function is as follows. Component of the F(0) channel, it forms part of the peripheral stalk, linking F(1) to F(0). In Streptococcus agalactiae serotype Ia (strain ATCC 27591 / A909 / CDC SS700), this protein is ATP synthase subunit b.